Here is a 186-residue protein sequence, read N- to C-terminus: Trafficking protein particle complex subunit 5 (186 aa).

Belongs to the TRAPP small subunits family. BET3 subfamily. Part of the multisubunit TRAPP (transport protein particle) complex.

The protein resides in the golgi apparatus. Its subcellular location is the cis-Golgi network. It localises to the endoplasmic reticulum. Functionally, may play a role in vesicular transport from endoplasmic reticulum to Golgi. The protein is Trafficking protein particle complex subunit 5 (trappc5) of Dictyostelium discoideum (Social amoeba).